Reading from the N-terminus, the 33-residue chain is U1-pseudomyrmecitoxin-Pt1 subunit LS1 (33 aa).

This sequence belongs to the myrmexin family. As to quaternary structure, heterodimer composed of subunit LS1 and subunit SS1 (U1-PSDTX-Pt1b), heterodimer composed of subunit LS1 and SS2 (U1-PSDTX-Pt1b), and heterodimer composed of subunit LS1 and SS3; disulfide-linked. Expressed by the venom gland.

It is found in the secreted. In terms of biological role, this heterodimer may have anti-inflammatory properties, since the myrmexin complex (composed of 6 SS-LS heterodimers) inhibits carrageenin-induced edema in a dose-dependent manner (after subcutaneous injection into rats). This is U1-pseudomyrmecitoxin-Pt1 subunit LS1 from Pseudomyrmex triplarinus (Ant).